Reading from the N-terminus, the 200-residue chain is 5'(3')-deoxyribonucleotidase, cytosolic type (200 aa).

The active-site Nucleophile is the Asp-12. Residues Asp-12 and Asp-14 each contribute to the Mg(2+) site. Asp-14 (proton donor) is an active-site residue. Substrate-binding residues include Phe-20, Phe-46, Tyr-67, and Thr-101. At Thr-102 the chain carries Phosphothreonine. Lys-136 serves as a coordination point for substrate. Asp-147 is a binding site for Mg(2+). Ser-184 is subject to Phosphoserine.

Belongs to the 5'(3')-deoxyribonucleotidase family. Homodimer. Requires Mg(2+) as cofactor.

It localises to the cytoplasm. Dephosphorylates the 5' and 2'(3')-phosphates of deoxyribonucleotides, with a preference for dUMP and dTMP, intermediate activity towards dGMP, and low activity towards dCMP and dAMP. This is 5'(3')-deoxyribonucleotidase, cytosolic type (Nt5c) from Mus musculus (Mouse).